Consider the following 315-residue polypeptide: Homoserine kinase (315 aa).

97–107 (PPARGLGSSAT) lines the ATP pocket.

This sequence belongs to the GHMP kinase family. Homoserine kinase subfamily.

It is found in the cytoplasm. The catalysed reaction is L-homoserine + ATP = O-phospho-L-homoserine + ADP + H(+). It participates in amino-acid biosynthesis; L-threonine biosynthesis; L-threonine from L-aspartate: step 4/5. Catalyzes the ATP-dependent phosphorylation of L-homoserine to L-homoserine phosphate. The chain is Homoserine kinase from Prochlorococcus marinus (strain MIT 9301).